The chain runs to 3966 residues: Histone-lysine N-methyltransferase 2A (3966 aa).

Disordered stretches follow at residues 1–106 (MAHS…LLRV) and 130–231 (VFGE…GVKI). The short motif at 6–25 (RWRFPARPGTTGGGGGGGRR) is the Menin-binding motif (MBM) element. Positions 15 to 29 (TTGGGGGGGRRGLGG) are enriched in gly residues. Residues 75 to 102 (GAAAASAASSSSASSSSSSSSSASSGPA) show a composition bias toward low complexity. The short motif at 121–132 (GTNLRRFRAVFG) is the Integrase domain-binding motif 1 (IBM1) element. Phosphoserine; by CK2 occurs at positions 134 and 140. The Integrase domain-binding motif 2 (IBM2) motif lies at 145–150 (QFLGFG). Residue S151 is modified to Phosphoserine. Residues 167 to 178 (KASPRKPRGRPR) constitute a DNA-binding region (a.T hook 1). S195 is modified (phosphoserine). The segment covering 200–218 (SETKSADKIKKKDSKSIEK) has biased composition (basic and acidic residues). A DNA-binding region (a.T hook 2) is located at residues 215-225 (SIEKKRGRPPT). K237 bears the N6-acetyllysine mark. The segment at residues 299–307 (RRRGRPPST) is a DNA-binding region (a.T hook 3). Residues 322–343 (LEKPQKVRKDKEGTPPLTKEDK) form a disordered region. The residue at position 371 (K371) is an N6-acetyllysine. Residues 440-590 (RLESTPNSRF…PWLMPPTIPL (151 aa)) are disordered. Residues 450-489 (SATSCGSSEKSSAASQHSSQMSSDSSRSSSPSIDTTSDSQ) show a composition bias toward low complexity. Phosphoserine is present on S516. Low complexity predominate over residues 544 to 557 (LPTLQSAPQQQTSS). Pro residues predominate over residues 558–571 (SPPPPLLTPPPPLQ). N6-acetyllysine is present on K634. S678 bears the Phosphoserine mark. Disordered regions lie at residues 711-943 (ESVT…ADVA), 963-1003 (RGNL…TSSI), 1034-1064 (IEKSKSLKQTDQPKAQGQESDSSETSVRGPR), and 1101-1161 (ILSS…CQVP). Low complexity-rich tracts occupy residues 717-730 (SNRTSSGASSSGVS) and 760-790 (LSTSELSPLTPPSSVSSSLSIPVSPLAASAL). 2 stretches are compositionally biased toward polar residues: residues 791–806 (NPTFTFPSHSLTQSGE) and 817–830 (QTSALAEPFSSNSP). Phosphothreonine is present on T837. The segment covering 843-887 (EKGRKKDTAPEELSKDRDADKSVEKDKSRERDREREKENKRESRK) has biased composition (basic and acidic residues). S923 bears the Phosphoserine mark. Low complexity predominate over residues 989 to 1003 (SAPSSSTVKHSTSSI). Residues 1040–1059 (LKQTDQPKAQGQESDSSETS) show a composition bias toward polar residues. S1053 is modified (phosphoserine). Over residues 1101-1111 (ILSSMGNDDKS) the composition is skewed to basic and acidic residues. K1127 carries the post-translational modification N6-acetyllysine. The CXXC-type zinc finger occupies 1144 to 1192 (KKGRRSRRCGQCPGCQVPEDCGICTNCLDKPKFGGRNIKKQCCKMRKCQ). Zn(2+) is bound by residues C1152, C1155, C1158, C1164, C1167, C1170, C1186, and C1191. Residues 1196–1390 (WMPSKASLQK…PLSNGISSKQ (195 aa)) are disordered. Positions 1217 to 1229 (SKTTEKKESKEST) are enriched in basic and acidic residues. Over residues 1230-1241 (AVKSPLEPAQKA) the composition is skewed to low complexity. An N6-acetyllysine modification is found at K1232. The segment covering 1245 to 1270 (PREEPAPKKSSSEPPPRKPVEEKSEE) has biased composition (basic and acidic residues). The span at 1369 to 1390 (KQENAGTLNILNPLSNGISSKQ) shows a compositional bias: polar residues. PHD-type zinc fingers lie at residues 1430–1481 (RVVC…CKFC), 1478–1532 (CKFC…CVRC), and 1565–1629 (GNFC…CTER). The segment at 1583-1599 (KMMQCGKCDRWVHSKCE) is interaction with histone H3K4me3. Residues 1637–1767 (ALEKELQASL…SFFIRQMERV (131 aa)) enclose the Bromo domain. Disordered stretches follow at residues 1665–1714 (YRQA…EGVK) and 1807–1870 (WQER…PGID). Pro residues predominate over residues 1828-1849 (APKPKGPGEPDSPTPLHPPTPP). Phosphoserine is present on S1839. The residue at position 1847 (T1847) is a Phosphothreonine. S1860 bears the Phosphoserine mark. The segment at 1872–1912 (NRQCALCLMYGDDSANDAGRLLYIGQNEWTHVNCALWSAEV) adopts a C2HC pre-PHD-type zinc-finger fold. A PHD-type 4 zinc finger spans residues 1933 to 1980 (LRCEFCQKPGATVGCCLTSCTSNYHFMCSRAKNCVFLDDKKVYCQRHR). One can recognise an FYR N-terminal domain in the interval 2020 to 2076 (NIHMMIGSMTIDCLGILNDLSDCEDKLFPIGYQCSRVYWSTTDARKRCVYTCKIMEC). A Phosphoserine modification is found at S2100. The disordered stretch occupies residues 2147–2174 (RTPSYSPTQRSPGCRPLPSAGSPTPTTH). Position 2148 is a phosphothreonine (T2148). Phosphoserine occurs at positions 2152 and 2202. Disordered regions lie at residues 2214–2339 (VRTG…ATPG), 2371–2619 (RGQR…SARA), 2639–2673 (EDIPFYSNSTGKKRGKRSAEGQVDGADDLSTSDED), and 2709–2759 (KISQ…DAGE). Residues 2218–2230 (SAYSRSSVSSVPS) show a composition bias toward low complexity. Polar residues-rich tracts occupy residues 2250–2284 (LSSSANLGHSAPPSSSSQRTVGGSKTSHLDGSSPS) and 2308–2320 (TSSSKSTDGSAHS). Composition is skewed to basic and acidic residues over residues 2411 to 2422 (ILHEHIGSSSRD) and 2430 to 2440 (SSKETCKEKHS). The segment covering 2498 to 2509 (GQSTQVEGSSKE) has biased composition (polar residues). K2524 participates in a covalent cross-link: Glycyl lysine isopeptide (Lys-Gly) (interchain with G-Cter in SUMO2). Residues 2528 to 2537 (ENQSKNTQKE) are compositionally biased toward polar residues. S2560 is subject to Phosphoserine. Over residues 2569–2588 (PSPNNTLSQDPQSNNYQNLP) the composition is skewed to polar residues. S2607 carries the post-translational modification Phosphoserine. Residues 2609 to 2618 (KRRYPRRSAR) show a composition bias toward basic residues. A compositionally biased stretch (acidic residues) spans 2663-2673 (GADDLSTSDED). The segment covering 2722-2737 (SDTSVTATSRKSSQIP) has biased composition (polar residues). Basic and acidic residues predominate over residues 2740-2759 (NGKENGTENLKIDRPEDAGE). The residue at position 2792 (S2792) is a Phosphoserine. The short motif at 2843–2851 (SDIMDFVLK) is the 9aaTAD element. Phosphoserine is present on S2951. N6-acetyllysine is present on K2954. 2 disordered regions span residues 2958-3060 (ITEK…NAAV) and 3164-3239 (AAQS…PSNI). Residues 3012–3025 (HGNSQDLTRNSGTP) are compositionally biased toward polar residues. A Phosphoserine modification is found at S3032. A compositionally biased stretch (polar residues) spans 3035-3060 (VPVQNQKYVPSSTDSPGPSQISNAAV). Residues 3167 to 3178 (SSFPPNISSPPS) show a composition bias toward low complexity. The span at 3196–3212 (EANQRTDLTTTVATPSS) shows a compositional bias: polar residues. Residues 3214-3229 (LKKRPISRLHTRKNKK) are compositionally biased toward basic residues. T3369 is subject to Phosphothreonine. K3459 carries the post-translational modification N6-acetyllysine. The tract at residues 3462–3640 (TLTSQRDRDP…AMEEEESGFS (179 aa)) is disordered. Polar residues predominate over residues 3475-3487 (PGTQPSNFTQTAE). The segment covering 3501-3528 (PSAKPASSASPGSSPSSGQQSGSSSVPG) has biased composition (low complexity). Phosphoserine occurs at positions 3510 and 3523. Residues 3558–3570 (TSSEAHIPHRDTD) show a composition bias toward basic and acidic residues. In terms of domain architecture, FYR C-terminal spans 3663 to 3744 (KKGLVFEISS…KHCRNYKFRF (82 aa)). Positions 3759–3764 (GSARAE) match the WDR5 interaction motif (WIN) motif. The segment at 3782-3805 (HRQPPEYNPNDEEEEEVQLKSARR) is disordered. Residues 3826 to 3942 (EAVGVYRSPI…RGEELTYDYK (117 aa)) enclose the SET domain. 2 residues coordinate S-adenosyl-L-methionine: H3836 and R3838. C3879 is subject to S-methylcysteine; by autocatalysis. Residues Y3880 and 3903-3904 (NH) contribute to the S-adenosyl-L-methionine site. C3906 and C3954 together coordinate Zn(2+). A Post-SET domain is found at 3950-3966 (NKLPCNCGAKKCRKFLN). N3955 contacts S-adenosyl-L-methionine. C3956 and C3961 together coordinate Zn(2+).

It belongs to the class V-like SAM-binding methyltransferase superfamily. Histone-lysine methyltransferase family. TRX/MLL subfamily. MLL cleavage product N320 heterodimerizes with MLL cleavage product C180 (via SET and FYRC domains). Component of some MLL1/MLL complex, at least composed of the core components KMT2A/MLL1, ASH2L, HCFC1/HCF1, HCFC2, WDR5, DPY30 and RBBP5, as well as the facultative components BACC1, CHD8, E2F6, HSP70, INO80C, KANSL1, LAS1L, MAX, MCRS1, MEN1, MGA, KAT8/MOF, PELP1, PHF20, PRP31, RING2, RUVB1/TIP49A, RUVB2/TIP49B, SENP3, TAF1, TAF4, TAF6, TAF7, TAF9 and TEX10. Interacts (via WIN motif) with WDR5; the interaction is direct. Interaction with WDR5 is required for stable interaction with ASH2L and RBBP5, and thereby also for optimal histone methyltransferase activity. Interacts with KAT8/MOF; the interaction is direct. Interacts with SBF1 and PPP1R15A. Interacts with ZNF335. Interacts with CLOCK and BMAL1 in a circadian manner. Interacts with PPIE; this results in decreased histone H3 methyltransferase activity. Interacts with CREBBP. Interacts with the WRAD complex composed of WDR5, RBBP5, ASH2L and DPY30. Interacts (via MBM motif) with MEN1. Interacts (via IBM motifs) with PSIP1 (via IBD domain) with moderate affinity whereas the KMT2A-MEN1 complex interacts with a greater affinity; MEN1 enhances interaction of KMT2A with PSIP1. Phosphorylation increases its affinity for PSIP1. Forms a complex with CREBBP and CREB1. Proteolytic cleavage by TASP1 generates MLL cleavage 3product N320 and MLL cleavage product C180, which reassemble through a non-covalent association. 2 cleavage sites exist, cleavage site 1 (CS1) and cleavage site 2 (CS2), to generate MLL cleavage products N320 and C180. CS2 is the major site. Post-translationally, phosphorylation increases its interaction with PSIP1. In terms of processing, auto-methylated at Cys-3879: auto-methylation is inhibited by the WRAD complex and unmodified histone H3.

It is found in the nucleus. The catalysed reaction is L-lysyl(4)-[histone H3] + S-adenosyl-L-methionine = N(6)-methyl-L-lysyl(4)-[histone H3] + S-adenosyl-L-homocysteine + H(+). It carries out the reaction N(6)-methyl-L-lysyl(4)-[histone H3] + S-adenosyl-L-methionine = N(6),N(6)-dimethyl-L-lysyl(4)-[histone H3] + S-adenosyl-L-homocysteine + H(+). It catalyses the reaction L-cysteinyl-[protein] + S-adenosyl-L-methionine = S-methyl-L-cysteinyl-[protein] + S-adenosyl-L-homocysteine + H(+). Its function is as follows. Histone methyltransferase that plays an essential role in early development and hematopoiesis. Catalytic subunit of the MLL1/MLL complex, a multiprotein complex that mediates both methylation of 'Lys-4' of histone H3 (H3K4me) complex and acetylation of 'Lys-16' of histone H4 (H4K16ac). Catalyzes methyl group transfer from S-adenosyl-L-methionine to the epsilon-amino group of 'Lys-4' of histone H3 (H3K4) via a non-processive mechanism. Part of chromatin remodeling machinery predominantly forms H3K4me1 and H3K4me2 methylation marks at active chromatin sites where transcription and DNA repair take place. Has weak methyltransferase activity by itself, and requires other component of the MLL1/MLL complex to obtain full methyltransferase activity. Has no activity toward histone H3 phosphorylated on 'Thr-3', less activity toward H3 dimethylated on 'Arg-8' or 'Lys-9', while it has higher activity toward H3 acetylated on 'Lys-9'. Binds to unmethylated CpG elements in the promoter of target genes and helps maintain them in the nonmethylated state. Required for transcriptional activation of HOXA9. Promotes PPP1R15A-induced apoptosis. Plays a critical role in the control of circadian gene expression and is essential for the transcriptional activation mediated by the CLOCK-BMAL1 heterodimer. Establishes a permissive chromatin state for circadian transcription by mediating a rhythmic methylation of 'Lys-4' of histone H3 (H3K4me) and this histone modification directs the circadian acetylation at H3K9 and H3K14 allowing the recruitment of CLOCK-BMAL1 to chromatin. Also has auto-methylation activity on Cys-3879 in absence of histone H3 substrate. The protein is Histone-lysine N-methyltransferase 2A (Kmt2a) of Mus musculus (Mouse).